Reading from the N-terminus, the 439-residue chain is Glutamate-1-semialdehyde 2,1-aminomutase (439 aa).

An N6-(pyridoxal phosphate)lysine modification is found at K273.

It belongs to the class-III pyridoxal-phosphate-dependent aminotransferase family. HemL subfamily. In terms of assembly, homodimer. The cofactor is pyridoxal 5'-phosphate.

The protein resides in the cytoplasm. The enzyme catalyses (S)-4-amino-5-oxopentanoate = 5-aminolevulinate. It functions in the pathway porphyrin-containing compound metabolism; protoporphyrin-IX biosynthesis; 5-aminolevulinate from L-glutamyl-tRNA(Glu): step 2/2. This is Glutamate-1-semialdehyde 2,1-aminomutase from Paenarthrobacter aurescens (strain TC1).